A 394-amino-acid polypeptide reads, in one-letter code: Serine palmitoyltransferase (394 aa).

Residues 111–112 (GF), Ser-183, His-211, and Thr-239 each bind pyridoxal 5'-phosphate. The residue at position 242 (Lys-242) is an N6-(pyridoxal phosphate)lysine.

The protein belongs to the class-II pyridoxal-phosphate-dependent aminotransferase family. Requires pyridoxal 5'-phosphate as cofactor.

The catalysed reaction is L-serine + hexadecanoyl-CoA + H(+) = 3-oxosphinganine + CO2 + CoA. It participates in lipid metabolism; sphingolipid metabolism. Involved in de novo bacterial ceramide synthesis. Catalyzes the condensation of L-serine with palmitoyl-CoA (hexadecanoyl-CoA) to produce 3-oxosphinganine. Also capable of using alanine as substrate leading to the formation of 1-deoxysphinganine (1-deoxySa). Contributes to the levels of endogenous sphingolipids in its host. The protein is Serine palmitoyltransferase of Bacteroides thetaiotaomicron (strain ATCC 29148 / DSM 2079 / JCM 5827 / CCUG 10774 / NCTC 10582 / VPI-5482 / E50).